A 312-amino-acid chain; its full sequence is 4-hydroxy-3-methylbut-2-enyl diphosphate reductase (312 aa).

Cysteine 15 is a binding site for [4Fe-4S] cluster. Residues histidine 44 and histidine 77 each coordinate (2E)-4-hydroxy-3-methylbut-2-enyl diphosphate. 2 residues coordinate dimethylallyl diphosphate: histidine 44 and histidine 77. The isopentenyl diphosphate site is built by histidine 44 and histidine 77. Cysteine 99 lines the [4Fe-4S] cluster pocket. Histidine 127 lines the (2E)-4-hydroxy-3-methylbut-2-enyl diphosphate pocket. Histidine 127 contacts dimethylallyl diphosphate. Residue histidine 127 coordinates isopentenyl diphosphate. Glutamate 129 functions as the Proton donor in the catalytic mechanism. Residue threonine 167 participates in (2E)-4-hydroxy-3-methylbut-2-enyl diphosphate binding. Cysteine 197 contributes to the [4Fe-4S] cluster binding site. The (2E)-4-hydroxy-3-methylbut-2-enyl diphosphate site is built by serine 225, serine 226, asparagine 227, and serine 269. Positions 225, 226, 227, and 269 each coordinate dimethylallyl diphosphate. Positions 225, 226, 227, and 269 each coordinate isopentenyl diphosphate.

The protein belongs to the IspH family. It depends on [4Fe-4S] cluster as a cofactor.

It catalyses the reaction isopentenyl diphosphate + 2 oxidized [2Fe-2S]-[ferredoxin] + H2O = (2E)-4-hydroxy-3-methylbut-2-enyl diphosphate + 2 reduced [2Fe-2S]-[ferredoxin] + 2 H(+). The catalysed reaction is dimethylallyl diphosphate + 2 oxidized [2Fe-2S]-[ferredoxin] + H2O = (2E)-4-hydroxy-3-methylbut-2-enyl diphosphate + 2 reduced [2Fe-2S]-[ferredoxin] + 2 H(+). It functions in the pathway isoprenoid biosynthesis; dimethylallyl diphosphate biosynthesis; dimethylallyl diphosphate from (2E)-4-hydroxy-3-methylbutenyl diphosphate: step 1/1. Its pathway is isoprenoid biosynthesis; isopentenyl diphosphate biosynthesis via DXP pathway; isopentenyl diphosphate from 1-deoxy-D-xylulose 5-phosphate: step 6/6. Functionally, catalyzes the conversion of 1-hydroxy-2-methyl-2-(E)-butenyl 4-diphosphate (HMBPP) into a mixture of isopentenyl diphosphate (IPP) and dimethylallyl diphosphate (DMAPP). Acts in the terminal step of the DOXP/MEP pathway for isoprenoid precursor biosynthesis. This Aromatoleum aromaticum (strain DSM 19018 / LMG 30748 / EbN1) (Azoarcus sp. (strain EbN1)) protein is 4-hydroxy-3-methylbut-2-enyl diphosphate reductase.